Reading from the N-terminus, the 97-residue chain is Large ribosomal subunit protein bL31 (97 aa).

Residues 75–97 are disordered; sequence NKTKKSNQAKVEKQTRHRSINEL. Basic and acidic residues predominate over residues 84–97; it reads KVEKQTRHRSINEL.

This sequence belongs to the bacterial ribosomal protein bL31 family. Type A subfamily. As to quaternary structure, part of the 50S ribosomal subunit.

In terms of biological role, binds the 23S rRNA. The polypeptide is Large ribosomal subunit protein bL31 (Mycoplasma genitalium (strain ATCC 33530 / DSM 19775 / NCTC 10195 / G37) (Mycoplasmoides genitalium)).